The primary structure comprises 35 residues: QKECTGPQHCTNFCRKNKCTHGKCMNRKCKCFNCK.

Glutamine 1 bears the Pyrrolidone carboxylic acid mark. Disulfide bonds link cysteine 4–cysteine 24, cysteine 10–cysteine 29, cysteine 14–cysteine 31, and cysteine 19–cysteine 34. Lysine 35 is subject to Lysine amide.

Belongs to the short scorpion toxin superfamily. Potassium channel inhibitor family. Alpha-KTx 06 subfamily. As to quaternary structure, monomer. As to expression, expressed by the venom gland.

The protein resides in the secreted. In terms of biological role, high affinity blocker of Kv1.3/KCNA3 channels of human T cells. Blocks Kv1.2/KCNA2 with an order of magnitude smaller than for Kv1.3/KCNA3. The protein is Potassium channel toxin alpha-KTx 6.12 of Anuroctonus phaiodactylus (Mafia scorpion).